A 192-amino-acid chain; its full sequence is Holliday junction branch migration complex subunit RuvA (192 aa).

Positions 1-64 (MLGRLTGLLA…EDAQVLFGFL (64 aa)) are domain I. Positions 65–139 (TAPERETFRM…GKLGADLGPA (75 aa)) are domain II. The segment at 139 to 143 (AIGGK) is flexible linker. Positions 144–192 (PASDAQADILQALIALGYSEREAQAAVKALPAEVGVSDGIKLALKALAR) are domain III.

This sequence belongs to the RuvA family. As to quaternary structure, homotetramer. Forms an RuvA(8)-RuvB(12)-Holliday junction (HJ) complex. HJ DNA is sandwiched between 2 RuvA tetramers; dsDNA enters through RuvA and exits via RuvB. An RuvB hexamer assembles on each DNA strand where it exits the tetramer. Each RuvB hexamer is contacted by two RuvA subunits (via domain III) on 2 adjacent RuvB subunits; this complex drives branch migration. In the full resolvosome a probable DNA-RuvA(4)-RuvB(12)-RuvC(2) complex forms which resolves the HJ.

It is found in the cytoplasm. Functionally, the RuvA-RuvB-RuvC complex processes Holliday junction (HJ) DNA during genetic recombination and DNA repair, while the RuvA-RuvB complex plays an important role in the rescue of blocked DNA replication forks via replication fork reversal (RFR). RuvA specifically binds to HJ cruciform DNA, conferring on it an open structure. The RuvB hexamer acts as an ATP-dependent pump, pulling dsDNA into and through the RuvAB complex. HJ branch migration allows RuvC to scan DNA until it finds its consensus sequence, where it cleaves and resolves the cruciform DNA. The polypeptide is Holliday junction branch migration complex subunit RuvA (Methylibium petroleiphilum (strain ATCC BAA-1232 / LMG 22953 / PM1)).